The primary structure comprises 501 residues: Solute carrier family 2, facilitated glucose transporter member 5 (501 aa).

Met1 carries the N-acetylmethionine modification. The Cytoplasmic portion of the chain corresponds to 1–18; sequence MEQQDQSMKEGRLTLVLA. The chain crosses the membrane as a helical span at residues 19–39; sequence LATLIAAFGSSFQYGYNVAAV. Tyr32 provides a ligand contact to D-fructose. Residues 40-68 lie on the Extracellular side of the membrane; it reads NSPALLMQQFYNETYYGRTGEFMEDFPLT. The N-linked (GlcNAc...) asparagine glycan is linked to Asn51. Residues 69 to 91 form a helical membrane-spanning segment; the sequence is LLWSVTVSMFPFGGFIGSLLVGP. The Cytoplasmic portion of the chain corresponds to 92-98; sequence LVNKFGR. The helical transmembrane segment at 99-119 threads the bilayer; it reads KGALLFNNIFSIVPAILMGCS. At 120 to 126 the chain is on the extracellular side; the sequence is RVAKSFE. A helical transmembrane segment spans residues 127-149; that stretch reads LIIISRLLVGICAGVSSNVVPMY. Residues 150–161 lie on the Cytoplasmic side of the membrane; the sequence is LGELAPKNLRGA. The chain crosses the membrane as a helical span at residues 162-182; sequence LGVVPQLFITVGILVAQIFGL. D-fructose is bound at residue Gln167. The Extracellular segment spans residues 183 to 192; sequence RNLLANVDGW. Residues 193–213 traverse the membrane as a helical segment; sequence PILLGLTGVPAALQLVLLPFF. Topologically, residues 214 to 277 are cytoplasmic; sequence PESPRYLLIQ…LFRMRSLRWQ (64 aa). The helical transmembrane segment at 278–298 threads the bilayer; sequence LLSIIVLMGGQQLSGVNAIYY. Residues Gln288 and 296-298 each bind D-fructose; that span reads IYY. Residues 299 to 313 are Extracellular-facing; it reads YADQIYLSAGVPKEH. A helical membrane pass occupies residues 314-334; sequence VQFVTAGTGAVNVVMTFCAVF. Residues 335–342 are Cytoplasmic-facing; that stretch reads VVELLGRR. A helical membrane pass occupies residues 343–363; that stretch reads LLLLLGFSICLVACCVLTAAL. At 364 to 371 the chain is on the extracellular side; that stretch reads ALQDTVSW. The helical transmembrane segment at 372–394 threads the bilayer; it reads MPYISIVCVISYVIGHALGPSPI. His387 provides a ligand contact to D-fructose. Topologically, residues 395-412 are cytoplasmic; sequence PALLITEIFLQSSRPSAF. A helical membrane pass occupies residues 413 to 433; sequence MVGGSVHWLSNFTVGLIFPFI. 419–420 contacts D-fructose; that stretch reads HW. Topologically, residues 434–439 are extracellular; it reads QEGLGP. A helical membrane pass occupies residues 440-460; sequence YSFIVFAVICLLTTIYIFLIV. Over 461-501 the chain is Cytoplasmic; sequence PETKAKTFIEINQIFTKMNKVSEVYPEKEELKELPPVTLEQ.

This sequence belongs to the major facilitator superfamily. Sugar transporter (TC 2.A.1.1) family. Glucose transporter subfamily.

It is found in the apical cell membrane. The protein resides in the cell membrane. Its subcellular location is the sarcolemma. The enzyme catalyses D-fructose(out) = D-fructose(in). In terms of biological role, functions as a fructose transporter that has only low activity with other monosaccharides. Can mediate the uptake of deoxyglucose, but with low efficiency. Essential for fructose uptake in the small intestine. Plays a role in the regulation of salt uptake and blood pressure in response to dietary fructose. Required for the development of high blood pressure in response to high dietary fructose intake. The sequence is that of Solute carrier family 2, facilitated glucose transporter member 5 from Pongo abelii (Sumatran orangutan).